The following is a 444-amino-acid chain: Zinc finger CCCH domain-containing protein 63 (444 aa).

3 C3H1-type zinc fingers span residues 56–84 (RIGE…HPAD), 101–129 (RIGQ…HPRE), and 147–175 (RPNE…HPQP). Residues 251-276 (GSSSSDDQQRTAGGAQYYTGSRHSET) are disordered. 2 consecutive C3H1-type zinc fingers follow at residues 309 to 337 (RPDQ…HPKE) and 355 to 383 (RPGE…HPMG). Residues 405-444 (PVPAHSEVSPDNVSGRSRRITHSDSQQIPSGERGTEREAS) form a disordered region.

The protein is Zinc finger CCCH domain-containing protein 63 of Oryza sativa subsp. japonica (Rice).